Consider the following 782-residue polypeptide: Spastin (782 aa).

Residues 1–103 (MVRTKNQSSS…GNAPRGGNSS (103 aa)) are disordered. Topologically, residues 1-115 (MVRTKNQSSS…KQNLYVVSFP (115 aa)) are cytoplasmic. The interval 1–212 (MVRTKNQSSS…RAIQPLEMAG (212 aa)) is required for localization to punctate cytoplasmic foci. Residues 8–19 (SSSSSASSSTKS) are compositionally biased toward low complexity. The span at 25 to 34 (GGTTNRSRSC) shows a compositional bias: polar residues. Low complexity-rich tracts occupy residues 44-75 (SKSSSKPTSNNRQRTTTNNNTTAITTTPGSSP) and 84-93 (TTDADLTPTS). An intramembrane region (helical) is located at residues 116-136 (IIFLFNVLRSLIYQLFCIFRY). Residues 137–782 (LYGASTKVIY…WSQDYGDITI (646 aa)) lie on the Cytoplasmic side of the membrane. Residues 210–782 (MAGNRAGGNY…WSQDYGDITI (573 aa)) are sufficient for interaction with microtubules and microtubule severing. The MIT domain maps to 235–310 (HRRAFEYISK…SMARDRLHFL (76 aa)). Positions 325 to 479 (KEQQQKKKSP…GSGSGASTPM (155 aa)) are disordered. Positions 334 to 343 (PQQQPQQQQQ) are enriched in low complexity. Polar residues-rich tracts occupy residues 408–426 (NKSQTLPRNLGSKTSSTSV) and 447–463 (QFSSGRNTPPQRSRTPI). The tract at residues 465–479 (NNAAGGSGSGASTPM) is required for interaction with microtubules. 547–554 (GPPGNGKT) lines the ATP pocket.

The protein belongs to the AAA ATPase family. Spastin subfamily. Homohexamer. The homohexamer is stabilized by ATP-binding. The homohexamer may adopt a ring conformation through which microtubules pass prior to being severed. Interacts with microtubules. Interacts with atl; may be involved in microtubule dynamics.

It localises to the membrane. Its subcellular location is the cytoplasm. The protein resides in the cytoskeleton. The protein localises to the microtubule organizing center. It is found in the centrosome. It localises to the chromosome. Its subcellular location is the lipid droplet. It carries out the reaction n ATP + n H2O + a microtubule = n ADP + n phosphate + (n+1) alpha/beta tubulin heterodimers.. Its function is as follows. ATP-dependent microtubule severing protein. Stimulates microtubule minus-end depolymerization and poleward microtubule flux in the mitotic spindle. Regulates microtubule stability in the neuromuscular junction synapse. Involved in lipid metabolism by regulating the size and distribution of lipid droplets. Involved in axon regeneration by regulating microtubule severing. The sequence is that of Spastin from Drosophila grimshawi (Hawaiian fruit fly).